The sequence spans 328 residues: Renalase (328 aa).

Residues alanine 13, 32-33 (DK), arginine 40, and 56-57 (QY) contribute to the FAD site. Substrate contacts are provided by residues 57-61 (YFTAR) and 96-98 (SPD). Residue isoleucine 128 coordinates FAD. Residue threonine 185 participates in substrate binding. FAD is bound at residue aspartate 302. Arginine 308 provides a ligand contact to substrate. Valine 309 provides a ligand contact to FAD.

It belongs to the bacterial renalase family. It depends on FAD as a cofactor.

It catalyses the reaction 1,2-dihydro-beta-NAD + O2 + H(+) = H2O2 + NAD(+). The enzyme catalyses 1,2-dihydro-beta-NADP + O2 + H(+) = H2O2 + NADP(+). It carries out the reaction 1,6-dihydro-beta-NADP + O2 + H(+) = H2O2 + NADP(+). The catalysed reaction is 1,6-dihydro-beta-NAD + O2 + H(+) = H2O2 + NAD(+). In terms of biological role, catalyzes the oxidation of the 1,2-dihydro- and 1,6-dihydro- isomeric forms of beta-NAD(P) back to beta-NAD(P)+. Has a preference for 1,2-dihydro-beta-NAD as substrate. May serve to protect primary metabolism dehydrogenases from inhibition by the 1,2-dihydro- and 1,6-dihydro-beta-NAD(P) isomers. The polypeptide is Renalase (Pseudomonas syringae pv. tomato (strain ATCC BAA-871 / DC3000)).